The sequence spans 859 residues: Rab effector MyRIP (859 aa).

Residues 4-124 (KLDLSGLTDD…AQSLEWFYNN (121 aa)) form the RabBD domain. The FYVE-type zinc-finger motif lies at 63–105 (CCMRCCSPFTFLVNTKRQCGDCKFNVCKSCCSYQKHEKAWVCC). The segment at 143–560 (RKHRLESGAC…LDTHQVSDDL (418 aa)) is myosin-binding. The tract at residues 193 to 209 (VALRVAEEAIEEAISKA) is PKA-binding. The negative regulation of PKA-binding stretch occupies residues 232 to 248 (LTEELATTILQKIIRKQ). Positions 251 to 285 (KSEQQVEEEPGWPHPQSCSTKVADEGTSASPGGYR) are disordered. The residue at position 298 (S298) is a Phosphoserine. Disordered stretches follow at residues 302 to 374 (EEAL…KPKS), 386 to 629 (VASA…SQSV), and 783 to 812 (DQKQRTQVQTIDTSRQQRRKLPAPPVKAEK). The segment covering 316-326 (QPRDQGQHPRA) has biased composition (basic and acidic residues). A Phosphoserine modification is found at S350. The segment covering 393–403 (MGSDSEEDFDW) has biased composition (acidic residues). Over residues 435–450 (PIAASPSSALSPNPEA) the composition is skewed to low complexity. Basic and acidic residues-rich tracts occupy residues 484–494 (AAEKMRLHGEL) and 607–617 (SEPKTESENQK). The tract at residues 495–856 (DVNFNPQLAS…DLMEPALESA (362 aa)) is actin-binding. Polar residues-rich tracts occupy residues 618-629 (ESLSSEDNSQSV) and 787-796 (RTQVQTIDTS).

In terms of assembly, binds MYO5A, MYO7A and F-actin. Binds RAB27A that has been activated by GTP-binding via its N-terminus. Interacts with PRKAR2A. Interacts with components of the exocyst complex, including EXOC3 and EXOC4. In terms of tissue distribution, detected in brain, skin, heart, adrenal medulla, pancreas, intestine, liver, kidney, muscle and testis.

It is found in the cytoplasm. It localises to the perinuclear region. The protein localises to the cytoplasmic vesicle. The protein resides in the secretory vesicle. Rab effector protein involved in melanosome transport. Serves as link between melanosome-bound RAB27A and the motor proteins MYO5A and MYO7A. May link RAB27A-containing vesicles to actin filaments. Functions as a protein kinase A-anchoring protein (AKAP). May act as a scaffolding protein that links PKA to components of the exocytosis machinery, thus facilitating exocytosis, including insulin release. This chain is Rab effector MyRIP (MYRIP), found in Homo sapiens (Human).